The chain runs to 833 residues: Translation initiation factor IF-2 (833 aa).

The tract at residues 1–247 is disordered; sequence MTEDVKKADG…ALQQAFTKPA (247 aa). Composition is skewed to basic and acidic residues over residues 53-99 and 110-152; these read QKAE…EAKK and VDVE…RYAE. A compositionally biased stretch (acidic residues) spans 153–166; that stretch reads LSEEDAENENSEDY. Positions 187-203 are enriched in basic residues; the sequence is KENRNRGGKNKVAKAKK. Residues 204-227 are compositionally biased toward basic and acidic residues; sequence GGREDESSKTERESNRRNQKDGKM. One can recognise a tr-type G domain in the interval 333-502; that stretch reads TRAPVVTIMG…LLQSEVLELT (170 aa). Positions 342–349 are G1; sequence GHVDHGKT. 342–349 provides a ligand contact to GTP; that stretch reads GHVDHGKT. A G2 region spans residues 367-371; it reads GITQH. A G3 region spans residues 388-391; it reads DTPG. GTP is bound by residues 388-392 and 442-445; these read DTPGH and NKID. A G4 region spans residues 442-445; that stretch reads NKID. The G5 stretch occupies residues 478-480; the sequence is SAK.

Belongs to the TRAFAC class translation factor GTPase superfamily. Classic translation factor GTPase family. IF-2 subfamily.

It is found in the cytoplasm. Its function is as follows. One of the essential components for the initiation of protein synthesis. Protects formylmethionyl-tRNA from spontaneous hydrolysis and promotes its binding to the 30S ribosomal subunits. Also involved in the hydrolysis of GTP during the formation of the 70S ribosomal complex. This chain is Translation initiation factor IF-2 (infB), found in Pasteurella multocida (strain Pm70).